A 486-amino-acid chain; its full sequence is ATP synthase subunit beta 2 (486 aa).

Residue 166–173 (GGAGVGKT) participates in ATP binding.

The protein belongs to the ATPase alpha/beta chains family. F-type ATPases have 2 components, CF(1) - the catalytic core - and CF(0) - the membrane proton channel. CF(1) has five subunits: alpha(3), beta(3), gamma(1), delta(1), epsilon(1). CF(0) has three main subunits: a(1), b(2) and c(9-12). The alpha and beta chains form an alternating ring which encloses part of the gamma chain. CF(1) is attached to CF(0) by a central stalk formed by the gamma and epsilon chains, while a peripheral stalk is formed by the delta and b chains.

It localises to the cell inner membrane. It carries out the reaction ATP + H2O + 4 H(+)(in) = ADP + phosphate + 5 H(+)(out). Functionally, produces ATP from ADP in the presence of a proton gradient across the membrane. The catalytic sites are hosted primarily by the beta subunits. In Gluconobacter oxydans (strain 621H) (Gluconobacter suboxydans), this protein is ATP synthase subunit beta 2.